The chain runs to 123 residues: Small ribosomal subunit protein uS13 (123 aa).

A disordered region spans residues 95-123; it reads GLPVRGQKTKTNARTRKGPKRAISGKKNK.

The protein belongs to the universal ribosomal protein uS13 family. Part of the 30S ribosomal subunit. Forms a loose heterodimer with protein S19. Forms two bridges to the 50S subunit in the 70S ribosome.

In terms of biological role, located at the top of the head of the 30S subunit, it contacts several helices of the 16S rRNA. In the 70S ribosome it contacts the 23S rRNA (bridge B1a) and protein L5 of the 50S subunit (bridge B1b), connecting the 2 subunits; these bridges are implicated in subunit movement. Contacts the tRNAs in the A and P-sites. This chain is Small ribosomal subunit protein uS13, found in Clostridium novyi (strain NT).